A 158-amino-acid polypeptide reads, in one-letter code: Siroheme decarboxylase beta subunit (158 aa).

Belongs to the Ahb/Nir family. In terms of assembly, forms a heterodimer composed of AhbA and AhbB.

It catalyses the reaction siroheme + 2 H(+) = 12,18-didecarboxysiroheme + 2 CO2. Its pathway is porphyrin-containing compound metabolism; protoheme biosynthesis. In terms of biological role, involved in siroheme-dependent heme b biosynthesis. Catalyzes the decarboxylation of siroheme into didecarboxysiroheme. The protein is Siroheme decarboxylase beta subunit of Oleidesulfovibrio alaskensis (strain ATCC BAA-1058 / DSM 17464 / G20) (Desulfovibrio alaskensis).